We begin with the raw amino-acid sequence, 351 residues long: GDSL esterase/lipase At3g14820 (351 aa).

A signal peptide spans 1–22; it reads MDLHLIGFLLWFFVVQVTTSSA. Asparagine 25 carries an N-linked (GlcNAc...) asparagine glycan. The active-site Nucleophile is the serine 39. Catalysis depends on residues aspartate 325 and histidine 328.

Belongs to the 'GDSL' lipolytic enzyme family.

Its subcellular location is the secreted. The sequence is that of GDSL esterase/lipase At3g14820 from Arabidopsis thaliana (Mouse-ear cress).